The following is a 358-amino-acid chain: Peptide chain release factor 1 (358 aa).

Residue glutamine 233 is modified to N5-methylglutamine.

It belongs to the prokaryotic/mitochondrial release factor family. Post-translationally, methylated by PrmC. Methylation increases the termination efficiency of RF1.

It is found in the cytoplasm. Its function is as follows. Peptide chain release factor 1 directs the termination of translation in response to the peptide chain termination codons UAG and UAA. This Listeria monocytogenes serotype 4b (strain CLIP80459) protein is Peptide chain release factor 1.